The sequence spans 382 residues: Chaperone protein DnaJ (382 aa).

The J domain occupies 5 to 70; sequence DFYEILGVPK…QKRAAYDQYG (66 aa). A CR-type zinc finger spans residues 137–215; the sequence is GVTKEIRIPT…CHGHGRVEKT (79 aa). Zn(2+) contacts are provided by Cys150, Cys153, Cys167, Cys170, Cys189, Cys192, Cys203, and Cys206. CXXCXGXG motif repeat units follow at residues 150 to 157, 167 to 174, 189 to 196, and 203 to 210; these read CDICHGSG, CPTCHGSG, CPHCHGRG, and CNKCHGHG.

Belongs to the DnaJ family. In terms of assembly, homodimer. Zn(2+) serves as cofactor.

Its subcellular location is the cytoplasm. Its function is as follows. Participates actively in the response to hyperosmotic and heat shock by preventing the aggregation of stress-denatured proteins and by disaggregating proteins, also in an autonomous, DnaK-independent fashion. Unfolded proteins bind initially to DnaJ; upon interaction with the DnaJ-bound protein, DnaK hydrolyzes its bound ATP, resulting in the formation of a stable complex. GrpE releases ADP from DnaK; ATP binding to DnaK triggers the release of the substrate protein, thus completing the reaction cycle. Several rounds of ATP-dependent interactions between DnaJ, DnaK and GrpE are required for fully efficient folding. Also involved, together with DnaK and GrpE, in the DNA replication of plasmids through activation of initiation proteins. The sequence is that of Chaperone protein DnaJ from Enterobacter sp. (strain 638).